The primary structure comprises 259 residues: Ribose-5-phosphate isomerase (259 aa).

The protein belongs to the ribose 5-phosphate isomerase family.

The protein localises to the cytoplasm. It carries out the reaction aldehydo-D-ribose 5-phosphate = D-ribulose 5-phosphate. The protein operates within carbohydrate degradation; pentose phosphate pathway; D-ribose 5-phosphate from D-ribulose 5-phosphate (non-oxidative stage): step 1/1. This chain is Ribose-5-phosphate isomerase (RKI1), found in Vanderwaltozyma polyspora (strain ATCC 22028 / DSM 70294 / BCRC 21397 / CBS 2163 / NBRC 10782 / NRRL Y-8283 / UCD 57-17) (Kluyveromyces polysporus).